The chain runs to 908 residues: Protein O-mannosyltransferase 1 (908 aa).

Disordered regions lie at residues 1–85 and 115–160; these read MYNN…SAIN and GSVE…SGSR. A compositionally biased stretch (basic residues) spans 21-31; that stretch reads QRRKTTTRSRS. Polar residues-rich tracts occupy residues 39–54 and 132–149; these read CTSE…NGAQ and LTAT…SPTI. The helical transmembrane segment at 190-210 threads the bilayer; that stretch reads FTVNLSIDLFSWTLFLLAFCT. An N-linked (GlcNAc...) asparagine glycan is attached at asparagine 265. The next 5 membrane-spanning stretches (helical) occupy residues 279–299, 311–328, 331–351, 370–390, and 418–438; these read VPIF…APAV, WAAA…SLLT, RFVL…ACLL, AGVL…ALAL, and LSRL…VFYV. MIR domains follow at residues 473 to 534, 545 to 602, and 608 to 664; these read PLAV…VKRP, PDVI…VEIL, and GDSW…VEEH. Helical transmembrane passes span 749-769, 788-808, 813-833, and 857-877; these read VLIW…LAFY, FLMA…PYYF, LFLH…CFVV, and LALL…LPLS.

This sequence belongs to the glycosyltransferase 39 family. As to quaternary structure, interacts with tw/POMT2.

Its subcellular location is the endoplasmic reticulum membrane. The catalysed reaction is a di-trans,poly-cis-dolichyl beta-D-mannosyl phosphate + L-seryl-[protein] = 3-O-(alpha-D-mannosyl)-L-seryl-[protein] + a di-trans,poly-cis-dolichyl phosphate + H(+). It catalyses the reaction a di-trans,poly-cis-dolichyl beta-D-mannosyl phosphate + L-threonyl-[protein] = 3-O-(alpha-D-mannosyl)-L-threonyl-[protein] + a di-trans,poly-cis-dolichyl phosphate + H(+). It participates in protein modification; protein glycosylation. Its function is as follows. Rt/POMT1 and tw/POMT2 function as a protein O-mannosyltransferase in association with each other to generate and maintain normal muscle development. The protein is Protein O-mannosyltransferase 1 of Drosophila pseudoobscura pseudoobscura (Fruit fly).